Here is a 196-residue protein sequence, read N- to C-terminus: Holliday junction resolvase RecU (196 aa).

4 residues coordinate Mg(2+): Thr-82, Asp-84, Glu-97, and Gln-116.

The protein belongs to the RecU family. Requires Mg(2+) as cofactor.

The protein localises to the cytoplasm. It catalyses the reaction Endonucleolytic cleavage at a junction such as a reciprocal single-stranded crossover between two homologous DNA duplexes (Holliday junction).. Functionally, endonuclease that resolves Holliday junction intermediates in genetic recombination. Cleaves mobile four-strand junctions by introducing symmetrical nicks in paired strands. Promotes annealing of linear ssDNA with homologous dsDNA. Required for DNA repair, homologous recombination and chromosome segregation. The sequence is that of Holliday junction resolvase RecU from Oceanobacillus iheyensis (strain DSM 14371 / CIP 107618 / JCM 11309 / KCTC 3954 / HTE831).